A 273-amino-acid polypeptide reads, in one-letter code: 4-hydroxy-tetrahydrodipicolinate reductase (273 aa).

NAD(+) contacts are provided by residues 12-17 (GAGGRM) and Glu-38. NADP(+) is bound at residue Arg-39. NAD(+) is bound by residues 102–104 (GTT) and 126–129 (AANF). The Proton donor/acceptor role is filled by His-159. Residue His-160 participates in (S)-2,3,4,5-tetrahydrodipicolinate binding. The active-site Proton donor is the Lys-163. 169–170 (GT) is a (S)-2,3,4,5-tetrahydrodipicolinate binding site.

It belongs to the DapB family. As to quaternary structure, homotetramer.

It localises to the cytoplasm. It carries out the reaction (S)-2,3,4,5-tetrahydrodipicolinate + NAD(+) + H2O = (2S,4S)-4-hydroxy-2,3,4,5-tetrahydrodipicolinate + NADH + H(+). The enzyme catalyses (S)-2,3,4,5-tetrahydrodipicolinate + NADP(+) + H2O = (2S,4S)-4-hydroxy-2,3,4,5-tetrahydrodipicolinate + NADPH + H(+). It functions in the pathway amino-acid biosynthesis; L-lysine biosynthesis via DAP pathway; (S)-tetrahydrodipicolinate from L-aspartate: step 4/4. Catalyzes the conversion of 4-hydroxy-tetrahydrodipicolinate (HTPA) to tetrahydrodipicolinate. The chain is 4-hydroxy-tetrahydrodipicolinate reductase from Shigella flexneri.